The sequence spans 180 residues: Bifunctional protein PyrR (180 aa).

Positions 99–111 (VILVDDVLYTCRT) match the PRPP-binding motif.

It belongs to the purine/pyrimidine phosphoribosyltransferase family. PyrR subfamily. In terms of assembly, homodimer and homohexamer; in equilibrium.

It catalyses the reaction UMP + diphosphate = 5-phospho-alpha-D-ribose 1-diphosphate + uracil. Its function is as follows. Regulates transcriptional attenuation of the pyrimidine nucleotide (pyr) operon by binding in a uridine-dependent manner to specific sites on pyr mRNA. This disrupts an antiterminator hairpin in the RNA and favors formation of a downstream transcription terminator, leading to a reduced expression of downstream genes. Also displays a weak uracil phosphoribosyltransferase activity which is not physiologically significant. The chain is Bifunctional protein PyrR from Clostridium botulinum (strain Eklund 17B / Type B).